Consider the following 355-residue polypeptide: Probable dual-specificity RNA methyltransferase RlmN (355 aa).

Positions 1-20 (MSATPVTQLTPSSQPQQPCS) are disordered. The Proton acceptor role is filled by glutamate 107. The Radical SAM core domain occupies 113–341 (TDKRLTVCVS…VSVRYSRGLE (229 aa)). Cysteine 120 and cysteine 346 form a disulfide bridge. 3 residues coordinate [4Fe-4S] cluster: cysteine 127, cysteine 131, and cysteine 134. S-adenosyl-L-methionine is bound by residues 174–175 (GE), serine 204, 227–229 (SLH), and asparagine 303. Cysteine 346 functions as the S-methylcysteine intermediate in the catalytic mechanism.

Belongs to the radical SAM superfamily. RlmN family. Requires [4Fe-4S] cluster as cofactor.

It localises to the cytoplasm. The catalysed reaction is adenosine(2503) in 23S rRNA + 2 reduced [2Fe-2S]-[ferredoxin] + 2 S-adenosyl-L-methionine = 2-methyladenosine(2503) in 23S rRNA + 5'-deoxyadenosine + L-methionine + 2 oxidized [2Fe-2S]-[ferredoxin] + S-adenosyl-L-homocysteine. It catalyses the reaction adenosine(37) in tRNA + 2 reduced [2Fe-2S]-[ferredoxin] + 2 S-adenosyl-L-methionine = 2-methyladenosine(37) in tRNA + 5'-deoxyadenosine + L-methionine + 2 oxidized [2Fe-2S]-[ferredoxin] + S-adenosyl-L-homocysteine. Specifically methylates position 2 of adenine 2503 in 23S rRNA and position 2 of adenine 37 in tRNAs. This chain is Probable dual-specificity RNA methyltransferase RlmN, found in Nostoc sp. (strain PCC 7120 / SAG 25.82 / UTEX 2576).